The following is a 253-amino-acid chain: Imidazole glycerol phosphate synthase subunit HisF (253 aa).

Catalysis depends on residues aspartate 11 and aspartate 130.

The protein belongs to the HisA/HisF family. As to quaternary structure, heterodimer of HisH and HisF.

The protein resides in the cytoplasm. The catalysed reaction is 5-[(5-phospho-1-deoxy-D-ribulos-1-ylimino)methylamino]-1-(5-phospho-beta-D-ribosyl)imidazole-4-carboxamide + L-glutamine = D-erythro-1-(imidazol-4-yl)glycerol 3-phosphate + 5-amino-1-(5-phospho-beta-D-ribosyl)imidazole-4-carboxamide + L-glutamate + H(+). It participates in amino-acid biosynthesis; L-histidine biosynthesis; L-histidine from 5-phospho-alpha-D-ribose 1-diphosphate: step 5/9. IGPS catalyzes the conversion of PRFAR and glutamine to IGP, AICAR and glutamate. The HisF subunit catalyzes the cyclization activity that produces IGP and AICAR from PRFAR using the ammonia provided by the HisH subunit. The protein is Imidazole glycerol phosphate synthase subunit HisF of Cereibacter sphaeroides (strain ATCC 17025 / ATH 2.4.3) (Rhodobacter sphaeroides).